A 327-amino-acid polypeptide reads, in one-letter code: MAMTIEVKDELSRLAVKSISARRAEVTSLLRFAGGLHIVGGRVVIEAEVDLENIARRLRKDIFDLYGYNAVVHVLSASGIRKSVRYVLRVANDGEALARQTGLLDMRGRPVRGLPAQVVGGSLIDAEAVWRGAFLAHGSLTEPGRSSALEVSCPGLEAALALVGAARKLGVNAKAREVRGADRVVVRDGEAIGVLLTRMGAQDTRLVWEERRMRREVRATANRLANFDDANLRRSARAAIAAAARAERALEILGDTVPDHLASAGKLRVEYRQASLEELGRLADPPMTKDAVAGRIRRLLSMADRKAKVEGIPDTESAVTPDLLEDA.

A DNA-binding region (H-T-H motif) is located at residues 275–308 (SLEELGRLADPPMTKDAVAGRIRRLLSMADRKAK).

It belongs to the WhiA family.

Involved in cell division and chromosome segregation. The protein is Probable cell division protein WhiA of Mycobacterium leprae (strain Br4923).